Here is a 354-residue protein sequence, read N- to C-terminus: Guanine nucleotide-binding protein G(o) subunit alpha (354 aa).

Residue G2 is the site of N-myristoyl glycine attachment. A lipid anchor (S-palmitoyl cysteine) is attached at C3. Residues 32 to 354 (KDIKLLLLGA…ANNLRGCGLY (323 aa)) enclose the G-alpha domain. Positions 35-48 (KLLLLGAGESGKST) are G1 motif. GTP contacts are provided by residues 40-47 (GAGESGKS), 176-182 (LRTRVKT), 201-205 (DVGGQ), 270-273 (NKKD), and A326. Mg(2+)-binding residues include S47 and T182. Positions 174-182 (DILRTRVKT) are G2 motif. Positions 197 to 206 (FKLFDVGGQR) are G3 motif. Positions 266–273 (ILFLNKKD) are G4 motif. Residues 324–329 (TCATDT) are G5 motif.

The protein belongs to the G-alpha family. G(i/o/t/z) subfamily. As to quaternary structure, g proteins are composed of 3 units; alpha, beta and gamma. The alpha chain contains the guanine nucleotide binding site.

Its function is as follows. Guanine nucleotide-binding proteins (G proteins) are involved as modulators or transducers in various transmembrane signaling systems. The G(o) protein function is not clear. The protein is Guanine nucleotide-binding protein G(o) subunit alpha of Locusta migratoria (Migratory locust).